Reading from the N-terminus, the 177-residue chain is Interleukin-1 receptor antagonist protein (177 aa).

The signal sequence occupies residues 1–25; the sequence is MRPSRSTRRHLISLLLFLFHSETAC. A disulfide bridge links cysteine 91 with cysteine 141. N-linked (GlcNAc...) asparagine glycosylation is present at asparagine 109.

The protein belongs to the IL-1 family.

Its subcellular location is the secreted. Functionally, anti-inflammatory antagonist of interleukin-1 family of proinflammatory cytokines such as interleukin-1beta/IL1B and interleukin-1alpha/IL1A. Protects from immune dysregulation and uncontrolled systemic inflammation triggered by IL1 for a range of innate stimulatory agents such as pathogens. This chain is Interleukin-1 receptor antagonist protein (IL1RN), found in Oryctolagus cuniculus (Rabbit).